We begin with the raw amino-acid sequence, 446 residues long: Phosphoglucosamine mutase (446 aa).

S100 (phosphoserine intermediate) is an active-site residue. Mg(2+) contacts are provided by S100, D241, D243, and D245. S100 is modified (phosphoserine).

The protein belongs to the phosphohexose mutase family. It depends on Mg(2+) as a cofactor. Activated by phosphorylation.

The enzyme catalyses alpha-D-glucosamine 1-phosphate = D-glucosamine 6-phosphate. Functionally, catalyzes the conversion of glucosamine-6-phosphate to glucosamine-1-phosphate. This is Phosphoglucosamine mutase from Methylobacterium nodulans (strain LMG 21967 / CNCM I-2342 / ORS 2060).